Here is a 393-residue protein sequence, read N- to C-terminus: UDP-N-acetylglucosamine--N-acetylmuramyl-(pentapeptide) pyrophosphoryl-undecaprenol N-acetylglucosamine transferase (393 aa).

UDP-N-acetyl-alpha-D-glucosamine is bound by residues 14 to 16, asparagine 128, arginine 170, serine 210, and glutamine 321; that span reads TAG.

The protein belongs to the glycosyltransferase 28 family. MurG subfamily.

The protein localises to the cell membrane. The enzyme catalyses di-trans,octa-cis-undecaprenyl diphospho-N-acetyl-alpha-D-muramoyl-L-alanyl-D-glutamyl-meso-2,6-diaminopimeloyl-D-alanyl-D-alanine + UDP-N-acetyl-alpha-D-glucosamine = di-trans,octa-cis-undecaprenyl diphospho-[N-acetyl-alpha-D-glucosaminyl-(1-&gt;4)]-N-acetyl-alpha-D-muramoyl-L-alanyl-D-glutamyl-meso-2,6-diaminopimeloyl-D-alanyl-D-alanine + UDP + H(+). It functions in the pathway cell wall biogenesis; peptidoglycan biosynthesis. Cell wall formation. Catalyzes the transfer of a GlcNAc subunit on undecaprenyl-pyrophosphoryl-MurNAc-pentapeptide (lipid intermediate I) to form undecaprenyl-pyrophosphoryl-MurNAc-(pentapeptide)GlcNAc (lipid intermediate II). The sequence is that of UDP-N-acetylglucosamine--N-acetylmuramyl-(pentapeptide) pyrophosphoryl-undecaprenol N-acetylglucosamine transferase from Bifidobacterium adolescentis (strain ATCC 15703 / DSM 20083 / NCTC 11814 / E194a).